The sequence spans 330 residues: Elongation factor Ts (330 aa).

Positions 79-82 (TDFV) are involved in Mg(2+) ion dislocation from EF-Tu.

This sequence belongs to the EF-Ts family.

It localises to the cytoplasm. Its function is as follows. Associates with the EF-Tu.GDP complex and induces the exchange of GDP to GTP. It remains bound to the aminoacyl-tRNA.EF-Tu.GTP complex up to the GTP hydrolysis stage on the ribosome. The chain is Elongation factor Ts from Bacteroides thetaiotaomicron (strain ATCC 29148 / DSM 2079 / JCM 5827 / CCUG 10774 / NCTC 10582 / VPI-5482 / E50).